The primary structure comprises 277 residues: Small ribosomal subunit protein uS3 (277 aa).

One can recognise a KH type-2 domain in the interval 43–111 (IRQLMSTGME…QVQLNILEVK (69 aa)). Residues 218-228 (QQAAAAPSRGR) are compositionally biased toward low complexity. The tract at residues 218–277 (QQAAAAPSRGRGASDRPGRPGGADRGDRRRRTDRPAAEAAPAAEAPAVEAAAPAVEGGQA) is disordered. Positions 229–244 (GASDRPGRPGGADRGD) are enriched in basic and acidic residues. Residues 254-277 (AEAAPAAEAPAVEAAAPAVEGGQA) show a composition bias toward low complexity.

Belongs to the universal ribosomal protein uS3 family. Part of the 30S ribosomal subunit. Forms a tight complex with proteins S10 and S14.

In terms of biological role, binds the lower part of the 30S subunit head. Binds mRNA in the 70S ribosome, positioning it for translation. The polypeptide is Small ribosomal subunit protein uS3 (Arthrobacter sp. (strain FB24)).